A 440-amino-acid polypeptide reads, in one-letter code: Thymidine phosphorylase (440 aa).

Belongs to the thymidine/pyrimidine-nucleoside phosphorylase family. Homodimer.

It catalyses the reaction thymidine + phosphate = 2-deoxy-alpha-D-ribose 1-phosphate + thymine. The protein operates within pyrimidine metabolism; dTMP biosynthesis via salvage pathway; dTMP from thymine: step 1/2. Its function is as follows. The enzymes which catalyze the reversible phosphorolysis of pyrimidine nucleosides are involved in the degradation of these compounds and in their utilization as carbon and energy sources, or in the rescue of pyrimidine bases for nucleotide synthesis. This Yersinia pestis protein is Thymidine phosphorylase.